Here is a 184-residue protein sequence, read N- to C-terminus: Coordinator of PRMT5 and differentiation stimulator (184 aa).

At Met1 the chain carries N-acetylmethionine. Over residues 1–14 (MDLQAAGAQAQGAA) the composition is skewed to low complexity. Positions 1 to 136 (MDLQAAGAQA…PYDADDIQES (136 aa)) are disordered. The segment covering 42–56 (SSQERETEKAMDRLA) has biased composition (basic and acidic residues). A phosphoserine mark is found at Ser66 and Ser75. Acidic residues predominate over residues 78–89 (EGFAMDEEDSDG).

Interacts with PRMT5. Interacts with histone H4; specifically interacts with the N-terminus of histone H4 but not with histone H3. Interacts with CBFB. Found in a complex with PRMT5, RUNX1 and CBFB.

The protein resides in the nucleus. Histone-binding protein required for histone H4 methyltransferase activity of PRMT5. Specifically required for histone H4 'Arg-3' methylation mediated by PRMT5, but not histone H3 'Arg-8' methylation, suggesting that it modulates the substrate specificity of PRMT5. Specifically interacts with the N-terminus of histone H4 but not with histone H3, suggesting that it acts by promoting the association between histone H4 and PRMT5. Involved in CCNE1 promoter repression. Plays a role in muscle cell differentiation by modulating the recruitment of PRMT5 to the promoter of genes involved in the coordination between cell cycle exit and muscle differentiation. The sequence is that of Coordinator of PRMT5 and differentiation stimulator (COPRS) from Homo sapiens (Human).